An 88-amino-acid polypeptide reads, in one-letter code: Cytochrome c oxidase subunit 6B2 (88 aa).

The tract at residues 1 to 21 is disordered; that stretch reads MLGVQAQMPAPGQWTTPPFDP. The region spanning 29-75 is the CHCH domain; it reads TRNCYQNFLDYHRCVKTMDRRGKNTQACDYYFRVFHSLCPVSWVQRW. The Cx9C motif motif lies at 32–42; it reads CYQNFLDYHRC. 2 disulfides stabilise this stretch: Cys32–Cys67 and Cys42–Cys56. Residues 56 to 67 carry the Cx10C motif motif; it reads CDYYFRVFHSLC.

It belongs to the cytochrome c oxidase subunit 6B family. As to quaternary structure, component of the cytochrome c oxidase (complex IV, CIV), a multisubunit enzyme composed of 14 subunits. The complex is composed of a catalytic core of 3 subunits MT-CO1, MT-CO2 and MT-CO3, encoded in the mitochondrial DNA, and 11 supernumerary subunits COX4I, COX5A, COX5B, COX6A, COX6B, COX6C, COX7A, COX7B, COX7C, COX8 and NDUFA4, which are encoded in the nuclear genome. The complex exists as a monomer or a dimer and forms supercomplexes (SCs) in the inner mitochondrial membrane with NADH-ubiquinone oxidoreductase (complex I, CI) and ubiquinol-cytochrome c oxidoreductase (cytochrome b-c1 complex, complex III, CIII), resulting in different assemblies (supercomplex SCI(1)III(2)IV(1) and megacomplex MCI(2)III(2)IV(2)). As to expression, testis specific.

It is found in the mitochondrion inner membrane. The protein operates within energy metabolism; oxidative phosphorylation. Its function is as follows. Component of the cytochrome c oxidase, the last enzyme in the mitochondrial electron transport chain which drives oxidative phosphorylation. The respiratory chain contains 3 multisubunit complexes succinate dehydrogenase (complex II, CII), ubiquinol-cytochrome c oxidoreductase (cytochrome b-c1 complex, complex III, CIII) and cytochrome c oxidase (complex IV, CIV), that cooperate to transfer electrons derived from NADH and succinate to molecular oxygen, creating an electrochemical gradient over the inner membrane that drives transmembrane transport and the ATP synthase. Cytochrome c oxidase is the component of the respiratory chain that catalyzes the reduction of oxygen to water. Electrons originating from reduced cytochrome c in the intermembrane space (IMS) are transferred via the dinuclear copper A center (CU(A)) of subunit 2 and heme A of subunit 1 to the active site in subunit 1, a binuclear center (BNC) formed by heme A3 and copper B (CU(B)). The BNC reduces molecular oxygen to 2 water molecules using 4 electrons from cytochrome c in the IMS and 4 protons from the mitochondrial matrix. This is Cytochrome c oxidase subunit 6B2 (Cox6b2) from Rattus norvegicus (Rat).